The following is a 342-amino-acid chain: Nucleoid-associated protein Shewmr7_2293 (342 aa).

It belongs to the YejK family.

It localises to the cytoplasm. It is found in the nucleoid. The polypeptide is Nucleoid-associated protein Shewmr7_2293 (Shewanella sp. (strain MR-7)).